The chain runs to 364 residues: Putative protein C31H2.4 (364 aa).

VOC domains follow at residues 6–134 (AIHH…LGEF) and 161–320 (LMDH…IFSK). Fe cation is bound by residues His164, His248, and Glu331.

The protein belongs to the 4HPPD family. The cofactor is Fe cation.

This chain is Putative protein C31H2.4, found in Caenorhabditis elegans.